A 286-amino-acid polypeptide reads, in one-letter code: Nucleotide-binding protein PLES_48441 (286 aa).

Residue 8-15 participates in ATP binding; that stretch reads GRSGSGKS. 60 to 63 contributes to the GTP binding site; sequence DARN.

Belongs to the RapZ-like family.

Displays ATPase and GTPase activities. The protein is Nucleotide-binding protein PLES_48441 of Pseudomonas aeruginosa (strain LESB58).